The primary structure comprises 446 residues: Tubulin beta chain (446 aa).

Positions 11, 69, 138, 142, 143, 144, 204, and 226 each coordinate GTP. Residue Glu69 participates in Mg(2+) binding. Positions 421–446 are disordered; it reads EYQQYQDAGIDEEEEEYEEELPEGEE. A compositionally biased stretch (acidic residues) spans 429–446; that stretch reads GIDEEEEEYEEELPEGEE.

This sequence belongs to the tubulin family. Dimer of alpha and beta chains. A typical microtubule is a hollow water-filled tube with an outer diameter of 25 nm and an inner diameter of 15 nM. Alpha-beta heterodimers associate head-to-tail to form protofilaments running lengthwise along the microtubule wall with the beta-tubulin subunit facing the microtubule plus end conferring a structural polarity. Microtubules usually have 13 protofilaments but different protofilament numbers can be found in some organisms and specialized cells. Mg(2+) is required as a cofactor.

It is found in the cytoplasm. The protein resides in the cytoskeleton. Tubulin is the major constituent of microtubules, a cylinder consisting of laterally associated linear protofilaments composed of alpha- and beta-tubulin heterodimers. Microtubules grow by the addition of GTP-tubulin dimers to the microtubule end, where a stabilizing cap forms. Below the cap, tubulin dimers are in GDP-bound state, owing to GTPase activity of alpha-tubulin. This is Tubulin beta chain (TUB2) from Fusarium fujikuroi (Bakanae and foot rot disease fungus).